The sequence spans 255 residues: 5'-nucleotidase SurE (255 aa).

Positions 13, 14, 44, and 100 each coordinate a divalent metal cation.

It belongs to the SurE nucleotidase family. It depends on a divalent metal cation as a cofactor.

The protein resides in the cytoplasm. The catalysed reaction is a ribonucleoside 5'-phosphate + H2O = a ribonucleoside + phosphate. Nucleotidase that shows phosphatase activity on nucleoside 5'-monophosphates. The polypeptide is 5'-nucleotidase SurE (Bacteroides fragilis (strain ATCC 25285 / DSM 2151 / CCUG 4856 / JCM 11019 / LMG 10263 / NCTC 9343 / Onslow / VPI 2553 / EN-2)).